A 217-amino-acid chain; its full sequence is Transmembrane protein 253 (217 aa).

The next 4 helical transmembrane spans lie at 33–53, 62–82, 96–116, and 138–158; these read LVLA…AVSV, MATA…TVTL, MMIF…VEVM, and LSAE…LFLL. Residues 187 to 217 form a disordered region; sequence PGLENGPTVASTGANERVGQREQTRAALLPP.

Its subcellular location is the membrane. The polypeptide is Transmembrane protein 253 (TMEM253) (Homo sapiens (Human)).